The sequence spans 70 residues: MKKDIHPKVFNATITCACGNEEKVLSTKGEQVNVEVCSACHPFFTGKQRFLDTAGRIDRFRKKYAKFEQK.

Residues Cys-16, Cys-18, Cys-37, and Cys-40 each coordinate Zn(2+).

Belongs to the bacterial ribosomal protein bL31 family. Type A subfamily. As to quaternary structure, part of the 50S ribosomal subunit. Requires Zn(2+) as cofactor.

Functionally, binds the 23S rRNA. This Desulfovibrio desulfuricans (strain ATCC 27774 / DSM 6949 / MB) protein is Large ribosomal subunit protein bL31.